Consider the following 386-residue polypeptide: S-(hydroxymethyl)glutathione dehydrogenase (386 aa).

An N-acetylserine modification is found at Ser-2. Cys-49 serves as a coordination point for Zn(2+). His-50 lines the NAD(+) pocket. Zn(2+) contacts are provided by His-71, Glu-72, Cys-101, Cys-104, Cys-107, Cys-115, and Cys-179. NAD(+) is bound by residues 204–209 (GCGTVG), Asp-228, 300–302 (IGV), and 325–327 (SAF).

It belongs to the zinc-containing alcohol dehydrogenase family. Class-III subfamily. Zn(2+) is required as a cofactor.

The protein localises to the cytoplasm. Its subcellular location is the mitochondrion. It carries out the reaction a primary alcohol + NAD(+) = an aldehyde + NADH + H(+). It catalyses the reaction a secondary alcohol + NAD(+) = a ketone + NADH + H(+). The enzyme catalyses S-(hydroxymethyl)glutathione + NADP(+) = S-formylglutathione + NADPH + H(+). The catalysed reaction is S-(hydroxymethyl)glutathione + NAD(+) = S-formylglutathione + NADH + H(+). It carries out the reaction S-nitrosoglutathione + NADH + H(+) = S-(hydroxysulfenamide)glutathione + NAD(+). Oxidizes long-chain alcohols and, in the presence of glutathione, is able to oxidize formaldehyde. Is responsible for yeast resistance to formaldehyde. Also acts as a S-nitroso-glutathione reductase by catalyzing the NADH-dependent reduction of S-nitrosoglutathione, thereby regulating protein S-nitrosylation. This chain is S-(hydroxymethyl)glutathione dehydrogenase (SFA1), found in Saccharomyces cerevisiae (strain ATCC 204508 / S288c) (Baker's yeast).